We begin with the raw amino-acid sequence, 214 residues long: Large ribosomal subunit protein uL18 (214 aa).

The protein belongs to the universal ribosomal protein uL18 family. Part of the 50S ribosomal subunit. Contacts the 5S and 23S rRNAs.

Functionally, this is one of the proteins that bind and probably mediate the attachment of the 5S RNA into the large ribosomal subunit, where it forms part of the central protuberance. The polypeptide is Large ribosomal subunit protein uL18 (Aeropyrum pernix (strain ATCC 700893 / DSM 11879 / JCM 9820 / NBRC 100138 / K1)).